The chain runs to 394 residues: Dual specificity protein phosphatase 4 (394 aa).

At V2 the chain carries N-acetylvaline. The Rhodanese domain occupies 41 to 159; that stretch reads SGGKCLLLDC…FSSEYPEFCS (119 aa). The Tyrosine-protein phosphatase domain occupies 195–336; the sequence is GPVEILPFLY…LLQFESQVLA (142 aa). The Phosphocysteine intermediate role is filled by C280. 2 positions are modified to phosphoserine; by MAPK: S386 and S391.

Belongs to the protein-tyrosine phosphatase family. Non-receptor class dual specificity subfamily. In terms of assembly, hollow spherical complex composed of 24 subunits with pseudooctahedral symmetry, has a tetramer as the basic unit. Phosphorylation in the C-terminus by ERK1/2 inhibits proteasomal degradation and stabilizes the protein.

The protein resides in the nucleus. The catalysed reaction is O-phospho-L-tyrosyl-[protein] + H2O = L-tyrosyl-[protein] + phosphate. The enzyme catalyses O-phospho-L-seryl-[protein] + H2O = L-seryl-[protein] + phosphate. It catalyses the reaction O-phospho-L-threonyl-[protein] + H2O = L-threonyl-[protein] + phosphate. Its function is as follows. Regulates mitogenic signal transduction by dephosphorylating both Thr and Tyr residues on MAP kinases ERK1 and ERK2. The sequence is that of Dual specificity protein phosphatase 4 (DUSP4) from Homo sapiens (Human).